Here is a 545-residue protein sequence, read N- to C-terminus: Beta-sesquiphellandrene synthase (545 aa).

Mg(2+)-binding residues include Asp-299, Asp-303, Asn-443, Ser-447, and Glu-451. Residues 299 to 303 (DDIMD) carry the DDXXD motif motif.

This sequence belongs to the terpene synthase family. Mg(2+) serves as cofactor. Requires Mn(2+) as cofactor.

It localises to the cytoplasm. It carries out the reaction (2E,6E)-farnesyl diphosphate = beta-sesquiphellandrene + diphosphate. Its pathway is secondary metabolite biosynthesis; terpenoid biosynthesis. Functionally, sesquiterpene synthase converting farnesyl diphosphate into beta-sesquiphellandrene and six minor products, zingiberene, 7-epi-sesquithujene, sesquisabinene A, (E)-alpha-bergamotene, (E)-beta-farnesene and beta-bisabolene. Can also accept geranyl diphosphate as substrate, producing nine monoterpenes, with myrcene and limonene as the major products. In Sorghum bicolor (Sorghum), this protein is Beta-sesquiphellandrene synthase (TPS2).